The chain runs to 206 residues: Small ribosomal subunit protein uS4 (206 aa).

An S4 RNA-binding domain is found at 96–156 (GRLDNVVYRM…EKSKKQSRIK (61 aa)).

The protein belongs to the universal ribosomal protein uS4 family. Part of the 30S ribosomal subunit. Contacts protein S5. The interaction surface between S4 and S5 is involved in control of translational fidelity.

In terms of biological role, one of the primary rRNA binding proteins, it binds directly to 16S rRNA where it nucleates assembly of the body of the 30S subunit. Its function is as follows. With S5 and S12 plays an important role in translational accuracy. This chain is Small ribosomal subunit protein uS4, found in Photorhabdus laumondii subsp. laumondii (strain DSM 15139 / CIP 105565 / TT01) (Photorhabdus luminescens subsp. laumondii).